A 717-amino-acid polypeptide reads, in one-letter code: Methylcrotonoyl-CoA carboxylase subunit alpha, mitochondrial (717 aa).

The transit peptide at 1-38 (MAAAALLAAVDRNQLRRVPILLLQPREWAWKLRTMKYG) directs the protein to the mitochondrion. Residues 45 to 490 (ITKVLIANRG…HTDFIPQHHK (446 aa)) form the Biotin carboxylation domain. An ATP-binding site is contributed by Lys-159. Residues 163 to 360 (KSIMAAAGVP…LVEWQLRIAA (198 aa)) form the ATP-grasp domain. N6-acetyllysine is present on residues Lys-180 and Lys-193. ATP is bound by residues Lys-201 and 207-208 (GG). An N6-acetyllysine modification is found at Lys-233. His-251, His-278, and Glu-318 together coordinate ATP. The active site involves Arg-335. Lys-490 carries the N6-acetyllysine modification. At Lys-577 the chain carries N6-acetyllysine; alternate. At Lys-577 the chain carries N6-succinyllysine; alternate. Residues 622 to 711 (SIEVGIPVPK…NRHAPLVEFE (90 aa)) enclose the Biotinyl-binding domain. The residue at position 677 (Lys-677) is an N6-biotinyllysine.

Probably a dodecamer composed of six biotin-containing alpha subunits (MCCC1) and six beta (MCCC2) subunits. Interacts (via the biotin carboxylation domain) with SIRT4. The cofactor is biotin. In terms of processing, acetylated.

It localises to the mitochondrion matrix. It catalyses the reaction 3-methylbut-2-enoyl-CoA + hydrogencarbonate + ATP = 3-methyl-(2E)-glutaconyl-CoA + ADP + phosphate + H(+). The protein operates within amino-acid degradation; L-leucine degradation; (S)-3-hydroxy-3-methylglutaryl-CoA from 3-isovaleryl-CoA: step 2/3. Biotin-attachment subunit of the 3-methylcrotonyl-CoA carboxylase, an enzyme that catalyzes the conversion of 3-methylcrotonyl-CoA to 3-methylglutaconyl-CoA, a critical step for leucine and isovaleric acid catabolism. This Mus musculus (Mouse) protein is Methylcrotonoyl-CoA carboxylase subunit alpha, mitochondrial (Mccc1).